The following is a 101-amino-acid chain: Movement protein (101 aa).

A helical transmembrane segment spans residues Glu-30–Leu-50. Positions Val-75–Gly-101 are disordered.

Belongs to the mastrevirus movement protein family. Interacts with the capsid protein (CP). Part of a MP-CP-viral DNA complex.

It localises to the host membrane. Involved in the viral transport within, and between cells. This is Movement protein from Maize streak virus genotype A (isolate Kenya) (MSV).